The chain runs to 142 residues: Universal stress protein C (142 aa).

The protein belongs to the universal stress protein A family.

Its subcellular location is the cytoplasm. In terms of biological role, required for resistance to DNA-damaging agents. In Escherichia coli (strain K12), this protein is Universal stress protein C (uspC).